Consider the following 630-residue polypeptide: Internalin B (630 aa).

The signal sequence occupies residues 1–30 (MKEKHNPRRKYCLISGLAIIFSLWIIIGNG). One can recognise an LRRNT domain in the interval 31 to 76 (AKVQAETITVSTPIKQIFPDDAFAETIKDNLKKKSVTDAVTQNELN). Residues proline 49, aspartate 51, glutamate 55, and aspartate 59 each contribute to the Ca(2+) site. LRR repeat units lie at residues 75–97 (LNSI…IQYL), 98–121 (PNVT…NLKN), 123–141 (GWLF…LKDL), 142–163 (KKLK…LVHL), 164–187 (PQLE…RLTK), 189–207 (DTLS…LAGL), and 208–231 (TKLQ…GLKN). The tract at residues 241–319 (ECLNKPINHQ…RFHGRVTQPL (79 aa)) is ig-like region. In terms of domain architecture, LRRCT spans 241 to 330 (ECLNKPINHQ…EVYTVSYDVD (90 aa)). The interval 320-392 (KEVYTVSYDV…TLYAVFKAET (73 aa)) is b repeat region. GW domains follow at residues 393–467 (TEKT…LDRY), 472–550 (YDKG…TFYK), and 553–630 (MEKP…RAQK). Residues 399-630 (LTRYVKYIRG…TKAANLRAQK (232 aa)) form a GW repeat region, necessary and sufficient for cell surface attachment, interacts with host C1QBP and with heparin region.

Belongs to the internalin family. As to quaternary structure, monomer. Interacts via its LRR repeats with the extracellular portion of mammalian host MET; MET can bind HGF, its endogenous ligand, and InlB simultaneously. Probably forms a dimer upon interaction with host MET, which subsequently allows dimerization of the host MET and subsequent host signaling; dimerization probably occurs via the convex surface of InlB. Interacts with host complement component 1 Q subcomponent-binding protein (C1QBP). Interacts in vitro with human intestinal mucin-2 (MUC2) but not with mucin-1. Ca(2+) is required as a cofactor.

The protein resides in the secreted. It is found in the cell surface. It localises to the cell membrane. Mediates the entry of L.monocytogenes into normally non-phagocytic mammalian host cells. Its host receptor is hepatocyte growth factor receptor (HGF receptor, a tyrosine kinase, MET) which is tyrosine-phosphorylated in response to InlB in human, green monkey, mouse and dog cell lines. Downstream adapter proteins GAB1 and CBL are phosphorylated in response to InlB, which also causes cell colony scattering. InlB binding to mammalian cells is saturable and inhibited by EDTA; InlB-coated beads can be taken up by host cells. Complement component 1 Q subcomponent-binding protein (gC1q-R, C1QBP) might act as an InlB receptor, leading to activation of PI3-kinase in green monkey cells. Stimulation of Tyr-phosphorylation by InlB is antagonized by C1QBP, showing that potentiation of MET signaling via the GW domains is not mediated by C1QBP; the exact role of C1QBP remains to be determined. Stimulation of Tyr-phosphorylation of MET by InlB is potentiated by the InlB GW domains and glycosaminoglycans such as heparin; exogenously added InlB, or hepatocyte growth factor (HGF) will also substitute for bacterial InlB, suggesting InlB promotes bacterial invasion by mimicking the hormone HGF. May stimulate phosphatidylinositol 4,5-bisphosphate 3-kinase (PI3-kinase) in green monkey cells, has less effect in humans as PI3-kinase is constitutively and highly expressed in Caco cells. Binds heparin; C1QBP and heparin seem to bind to the GW domains. This is Internalin B (inlB) from Listeria monocytogenes serotype 1/2a (strain EGD / Mackaness).